Reading from the N-terminus, the 271-residue chain is 2-dehydro-3-deoxyphosphooctonate aldolase (271 aa).

This sequence belongs to the KdsA family.

The protein resides in the cytoplasm. It carries out the reaction D-arabinose 5-phosphate + phosphoenolpyruvate + H2O = 3-deoxy-alpha-D-manno-2-octulosonate-8-phosphate + phosphate. It functions in the pathway carbohydrate biosynthesis; 3-deoxy-D-manno-octulosonate biosynthesis; 3-deoxy-D-manno-octulosonate from D-ribulose 5-phosphate: step 2/3. Its pathway is bacterial outer membrane biogenesis; lipopolysaccharide biosynthesis. The protein is 2-dehydro-3-deoxyphosphooctonate aldolase of Campylobacter jejuni subsp. jejuni serotype O:23/36 (strain 81-176).